The primary structure comprises 162 residues: Cyclic pyranopterin monophosphate synthase (162 aa).

Substrate contacts are provided by residues 75-77 (MCH) and 116-117 (ME). The active site involves aspartate 131.

This sequence belongs to the MoaC family. Homohexamer; trimer of dimers.

It catalyses the reaction (8S)-3',8-cyclo-7,8-dihydroguanosine 5'-triphosphate = cyclic pyranopterin phosphate + diphosphate. The protein operates within cofactor biosynthesis; molybdopterin biosynthesis. In terms of biological role, catalyzes the conversion of (8S)-3',8-cyclo-7,8-dihydroguanosine 5'-triphosphate to cyclic pyranopterin monophosphate (cPMP). This Staphylococcus epidermidis (strain ATCC 35984 / DSM 28319 / BCRC 17069 / CCUG 31568 / BM 3577 / RP62A) protein is Cyclic pyranopterin monophosphate synthase.